We begin with the raw amino-acid sequence, 467 residues long: Glutamine synthetase (467 aa).

A GS beta-grasp domain is found at His-11–Thr-95. Positions Pro-103–Val-467 constitute a GS catalytic domain. Glu-128 and Glu-130 together coordinate Mg(2+). Position 206 (Glu-206) interacts with ATP. Mg(2+) contacts are provided by Glu-211 and Glu-219. L-glutamate is bound by residues Asn-263–Gly-264 and Gly-264. His-268 lines the Mg(2+) pocket. ATP-binding positions include His-270–Ser-272 and Ser-272. 3 residues coordinate L-glutamate: Arg-320, Glu-326, and Arg-338. ATP-binding residues include Arg-338, Arg-343, and Lys-351. Residue Glu-356 coordinates Mg(2+). Arg-358 contacts L-glutamate. Residue Tyr-396 is modified to O-AMP-tyrosine.

Belongs to the glutamine synthetase family. As to quaternary structure, oligomer of 12 subunits arranged in the form of two hexameric ring. Mg(2+) serves as cofactor.

It localises to the cytoplasm. It carries out the reaction L-glutamate + NH4(+) + ATP = L-glutamine + ADP + phosphate + H(+). The activity of this enzyme could be controlled by adenylation under conditions of abundant glutamine. Catalyzes the ATP-dependent biosynthesis of glutamine from glutamate and ammonia. This Azotobacter vinelandii protein is Glutamine synthetase.